Here is a 105-residue protein sequence, read N- to C-terminus: UPF0235 protein RPR_04990 (105 aa).

This sequence belongs to the UPF0235 family.

In Rickettsia peacockii (strain Rustic), this protein is UPF0235 protein RPR_04990.